The sequence spans 711 residues: Glycine--tRNA ligase beta subunit (711 aa).

It belongs to the class-II aminoacyl-tRNA synthetase family. As to quaternary structure, tetramer of two alpha and two beta subunits.

The protein resides in the cytoplasm. It carries out the reaction tRNA(Gly) + glycine + ATP = glycyl-tRNA(Gly) + AMP + diphosphate. The polypeptide is Glycine--tRNA ligase beta subunit (Polaromonas naphthalenivorans (strain CJ2)).